Here is a 22-residue protein sequence, read N- to C-terminus: Pectinesterase (22 aa).

D6 acts as the Proton donor in catalysis. R19 and W21 together coordinate substrate.

It belongs to the pectinesterase family.

Its subcellular location is the secreted. It localises to the cell wall. The catalysed reaction is [(1-&gt;4)-alpha-D-galacturonosyl methyl ester](n) + n H2O = [(1-&gt;4)-alpha-D-galacturonosyl](n) + n methanol + n H(+). Its pathway is glycan metabolism; pectin degradation; 2-dehydro-3-deoxy-D-gluconate from pectin: step 1/5. The protein is Pectinesterase of Capsicum chinense (Scotch bonnet).